The chain runs to 542 residues: Putative serine/threonine-protein kinase L205 (542 aa).

A compositionally biased stretch (basic and acidic residues) spans 20–30 (FEKKSVGHNSD). The tract at residues 20 to 49 (FEKKSVGHNSDDEYDDTVPYNEDDETSEEE) is disordered. A compositionally biased stretch (acidic residues) spans 31 to 49 (DEYDDTVPYNEDDETSEEE). Positions 69-538 (YLLLKKIGSG…ADELLKHPWL (470 aa)) constitute a Protein kinase domain. Residues 75–83 (IGSGNNASV) and Lys-98 each bind ATP. Catalysis depends on Asp-201, which acts as the Proton acceptor. Positions 278–314 (EELIPDDPDNNEKYYDSTDSEEYDYSDNSDYYDDDED) are disordered. Over residues 295–314 (TDSEEYDYSDNSDYYDDDED) the composition is skewed to acidic residues.

The protein belongs to the protein kinase superfamily. Ser/Thr protein kinase family.

The enzyme catalyses L-seryl-[protein] + ATP = O-phospho-L-seryl-[protein] + ADP + H(+). It carries out the reaction L-threonyl-[protein] + ATP = O-phospho-L-threonyl-[protein] + ADP + H(+). This Acanthamoeba polyphaga (Amoeba) protein is Putative serine/threonine-protein kinase L205.